Here is a 269-residue protein sequence, read N- to C-terminus: Putative pyruvate, phosphate dikinase regulatory protein (269 aa).

An ADP-binding site is contributed by 147–154; it reads GLSRTSKT.

Belongs to the pyruvate, phosphate/water dikinase regulatory protein family. PDRP subfamily.

It carries out the reaction N(tele)-phospho-L-histidyl/L-threonyl-[pyruvate, phosphate dikinase] + ADP = N(tele)-phospho-L-histidyl/O-phospho-L-threonyl-[pyruvate, phosphate dikinase] + AMP + H(+). It catalyses the reaction N(tele)-phospho-L-histidyl/O-phospho-L-threonyl-[pyruvate, phosphate dikinase] + phosphate + H(+) = N(tele)-phospho-L-histidyl/L-threonyl-[pyruvate, phosphate dikinase] + diphosphate. Bifunctional serine/threonine kinase and phosphorylase involved in the regulation of the pyruvate, phosphate dikinase (PPDK) by catalyzing its phosphorylation/dephosphorylation. This chain is Putative pyruvate, phosphate dikinase regulatory protein, found in Clostridium botulinum (strain ATCC 19397 / Type A).